Reading from the N-terminus, the 584-residue chain is Adenine deaminase (584 aa).

Belongs to the metallo-dependent hydrolases superfamily. Adenine deaminase family. Requires Mn(2+) as cofactor.

It carries out the reaction adenine + H2O + H(+) = hypoxanthine + NH4(+). The polypeptide is Adenine deaminase (Methanococcoides burtonii (strain DSM 6242 / NBRC 107633 / OCM 468 / ACE-M)).